The primary structure comprises 1002 residues: Vacuolar protein sorting-associated protein 18 homolog (1002 aa).

The residue at position 344 (Ser344) is a Phosphoserine. A CHCR repeat occupies Leu650–Lys804. The stretch at Phe827–Glu880 forms a coiled coil. The segment at Cys885–Cys924 adopts an RING-type; degenerate zinc-finger fold.

This sequence belongs to the VPS18 family. In terms of assembly, component of the class C core vacuole/endosome tethering (CORVET) complex composed of at least Vps8, dor/Vps18, car/Vps33A and Vps16A; unlike in other species, Vps11 is not part of the Drosophila complex. Due to the reduced number of components the Drosophila CORVET complex is often referred to as the miniCORVET complex. Interacts with car/Vps33A. Interacts with ema. Component of the homotypic fusion and vacuole protein sorting (HOPS) complex, composed of Vps16A, car/Vps33A, dor/Vps18, Vps39, Vps11 and lt/Vps41. The tethering complex core made up of Vps16A, car/Vps33A and dor/Vps18 and shared by both HOPS and CORVET, preferentially associates with CORVET-specific Vps8 over HOPS-specific lt/Vps41. Interacts with Syx17 (via SNARE domain); the interaction may involve multiple components of the HOPS complex and may promote assembly of the Syx17-Snap29-Vamp7 trans-SNARE complex.

It is found in the early endosome. The protein resides in the late endosome membrane. Its subcellular location is the lysosome membrane. The protein localises to the cytoplasmic vesicle. It localises to the autophagosome. Its function is as follows. Core component of the class C core vacuole/endosome tethering (CORVET) and the homotypic fusion and vacuole protein sorting (HOPS) tethering complexes involved in endo-lysosomal vesicle trafficking and lysosome biogenesis. The CORVET complex facilitates docking and fusion of endosomal vesicles during endosome maturation, acts upstream of HOPS, but is not involved in autophagic flux. The CORVET complex may cooperate with the early endosomal tether Rbsn-5 to mediate endosomal fusion. The HOPS complex facilitates docking and fusion of lysosomes with late endosomes and several other types of vesicles. The HOPS complex is also involved in autophagy and crinophagy (the elimination of unused secretory granules through their fusion with lysosomes). The HOPS complex mediates autophagocitic flux, probably by binding autophagosome-associated Syx17/syntaxin 17, promoting assembly of the trans-SNARE complex and instigating autophagosome-lysosome fusion. Independent of Syx17/syntaxin 17, HOPS is involved in biosynthetic transport to lysosomes and lysosome-related organelles such as eye-pigment granules. Required for endocytic degradation of boss/bride of sevenless and N/Notch in developing ommatidia. Required for autophagocytosis-dependent remodeling of myofibrils and transverse-tubules (T-tubules) during metamorphosis. In larval neuromuscular junctions, essential for endosomal sorting that traffics old or dysfunctional synaptic vesicle proteins through a degradative endolysosomal route. Required to maintain normal levels of rush, which functions in endosome formation and trafficking. The polypeptide is Vacuolar protein sorting-associated protein 18 homolog (Drosophila melanogaster (Fruit fly)).